We begin with the raw amino-acid sequence, 212 residues long: Fucoxanthin-chlorophyll a-c binding protein E, chloroplastic (212 aa).

Residues methionine 1–methionine 34 constitute a chloroplast transit peptide. A run of 3 helical transmembrane segments spans residues isoleucine 76–leucine 96, isoleucine 117–valine 137, and glycine 178–proline 198.

This sequence belongs to the fucoxanthin chlorophyll protein family. As to quaternary structure, the LHC complex of chromophytic algae is composed of fucoxanthin, chlorophyll A and C bound non-covalently by fucoxanthin chlorophyll proteins (FCPs). The ratio of pigments in this LHC is; fucoxanthin: chlorophyll C: chlorophyll A; (0.6-1): (0.1-0.3): (1).

Its subcellular location is the plastid. It localises to the chloroplast thylakoid membrane. In terms of biological role, the light-harvesting complex (LHC) functions as a light receptor, it captures and delivers excitation energy to photosystems with which it is closely associated. Energy is transferred from the carotenoid and chlorophyll C (or B) to chlorophyll A and the photosynthetic reaction centers where it is used to synthesize ATP and reducing power. The protein is Fucoxanthin-chlorophyll a-c binding protein E, chloroplastic (FCPE) of Macrocystis pyrifera (Giant kelp).